Here is a 366-residue protein sequence, read N- to C-terminus: Nodulation protein NolL (366 aa).

9 consecutive transmembrane segments (helical) span residues 27-47, 62-82, 98-118, 140-160, 164-184, 212-232, 253-273, 286-306, and 324-344; these read FVKGILIILVVLGHLLQLVIY, IYMFHMPLFMAISGYLASGTI, LLIPMLFWCALIETAKLAAFF, FLWAVLASFLLTKLFAAFNLL, ILCASAIVIALMPITLSIVPL, HKSLLMFSCWAVACLCFLDWG, VLLMFTGSAAAAAVAAQSLFH, LVAVELGQSTLLLYLVQGAVF, and IVVASAIGAAIFGAATAVLWI.

It belongs to the acyltransferase 3 family.

Its subcellular location is the cell membrane. Its function is as follows. Thought to be an acetyltransferase that modifies the fucose of the nod factor. The chain is Nodulation protein NolL (nolL) from Sinorhizobium fredii (strain NBRC 101917 / NGR234).